We begin with the raw amino-acid sequence, 363 residues long: Aminomethyltransferase (363 aa).

Belongs to the GcvT family. The glycine cleavage system is composed of four proteins: P, T, L and H.

The catalysed reaction is N(6)-[(R)-S(8)-aminomethyldihydrolipoyl]-L-lysyl-[protein] + (6S)-5,6,7,8-tetrahydrofolate = N(6)-[(R)-dihydrolipoyl]-L-lysyl-[protein] + (6R)-5,10-methylene-5,6,7,8-tetrahydrofolate + NH4(+). Its function is as follows. The glycine cleavage system catalyzes the degradation of glycine. The chain is Aminomethyltransferase from Thermosipho melanesiensis (strain DSM 12029 / CIP 104789 / BI429).